Reading from the N-terminus, the 1205-residue chain is Caskin-2 (1205 aa).

ANK repeat units follow at residues 48–77 (DGFS…SVDI), 81–110 (NGMR…SVNA), 114–143 (DGQI…NPCH), 147–176 (GKKT…CVSL), 188–217 (NFTT…EINK), and 220–249 (KMGT…DVNI). The SH3 domain maps to 281-347 (SGILKVRALK…PPSIVEVISK (67 aa)). Polar residues-rich tracts occupy residues 377–388 (SPGSQLGINPDT) and 398–411 (GSES…SGQS). A disordered region spans residues 377-411 (SPGSQLGINPDTSVAGDRHSVGSESSVRSAGSGQS). 2 consecutive SAM domains span residues 468-531 (KDAE…LIVA) and 537-601 (QIPV…LLDL). The span at 666–687 (RRSFSQESISSRSQGSGHSQES) shows a compositional bias: low complexity. Disordered stretches follow at residues 666 to 689 (RRSF…ESAS), 784 to 964 (RPGR…QRHL), 984 to 1054 (QIAA…SQEP), and 1132 to 1155 (SEAS…KGPP). The span at 823-840 (SSMSSAEGQSPEGQSSVK) shows a compositional bias: polar residues. The span at 908 to 919 (ISSQHSSSESIP) shows a compositional bias: low complexity. The span at 942–959 (DATSELSPTQESQLQSAE) shows a compositional bias: polar residues. The span at 1009-1037 (KNEEHDFNLTESDTVKRRPKVKEKEEESP) shows a compositional bias: basic and acidic residues. Composition is skewed to polar residues over residues 1042-1054 (ANNS…SQEP) and 1137-1155 (REQT…KGPP).

This Xenopus laevis (African clawed frog) protein is Caskin-2 (caskin2).